We begin with the raw amino-acid sequence, 254 residues long: Imidazole glycerol phosphate synthase subunit HisF (254 aa).

Active-site residues include D12 and D131.

The protein belongs to the HisA/HisF family. In terms of assembly, heterodimer of HisH and HisF.

Its subcellular location is the cytoplasm. It catalyses the reaction 5-[(5-phospho-1-deoxy-D-ribulos-1-ylimino)methylamino]-1-(5-phospho-beta-D-ribosyl)imidazole-4-carboxamide + L-glutamine = D-erythro-1-(imidazol-4-yl)glycerol 3-phosphate + 5-amino-1-(5-phospho-beta-D-ribosyl)imidazole-4-carboxamide + L-glutamate + H(+). It functions in the pathway amino-acid biosynthesis; L-histidine biosynthesis; L-histidine from 5-phospho-alpha-D-ribose 1-diphosphate: step 5/9. IGPS catalyzes the conversion of PRFAR and glutamine to IGP, AICAR and glutamate. The HisF subunit catalyzes the cyclization activity that produces IGP and AICAR from PRFAR using the ammonia provided by the HisH subunit. This is Imidazole glycerol phosphate synthase subunit HisF from Leifsonia xyli subsp. xyli (strain CTCB07).